The sequence spans 428 residues: 3-deoxy-D-manno-octulosonic acid transferase (428 aa).

Catalysis depends on glutamate 64, which acts as the Proton acceptor. CMP is bound by residues 274–275 (PR), 316–318 (LGE), and 342–345 (NLIE).

It belongs to the glycosyltransferase group 1 family. Glycosyltransferase 30 subfamily.

The protein localises to the cell inner membrane. The catalysed reaction is lipid IVA (E. coli) + CMP-3-deoxy-beta-D-manno-octulosonate = alpha-Kdo-(2-&gt;6)-lipid IVA (E. coli) + CMP + H(+). Its pathway is bacterial outer membrane biogenesis; LPS core biosynthesis. Involved in lipopolysaccharide (LPS) biosynthesis. Catalyzes the transfer of a single 3-deoxy-D-manno-octulosonate (Kdo) residue from CMP-Kdo to lipid IV(A), the tetraacyldisaccharide-1,4'-bisphosphate precursor of lipid A. This Bordetella pertussis protein is 3-deoxy-D-manno-octulosonic acid transferase (waaA).